The following is a 211-amino-acid chain: MSKVLFIKASPLPNEVSRSSQVAATFIDEYKAKNPSDTVEELVLYNTEVPLLDLELMTAGRELQAGKAFTDLAPDVQKRLNAYNALTEQFLAADKYVFVFPLWNLGIPPLLKAYVDTFVIAGKSFRYTEHGPEALLKGKKAILIHGSGGIYSAGPTSSFTHGEPYLRTILQFIGIDVVPSIFVEGIDHNPSKEAEIVAAAKAVAHESAAEF.

FMN contacts are provided by residues S10 and S17–S19.

It belongs to the azoreductase type 1 family. As to quaternary structure, homodimer. The cofactor is FMN.

It catalyses the reaction 2 a quinone + NADH + H(+) = 2 a 1,4-benzosemiquinone + NAD(+). The enzyme catalyses N,N-dimethyl-1,4-phenylenediamine + anthranilate + 2 NAD(+) = 2-(4-dimethylaminophenyl)diazenylbenzoate + 2 NADH + 2 H(+). In terms of biological role, quinone reductase that provides resistance to thiol-specific stress caused by electrophilic quinones. Functionally, also exhibits azoreductase activity. Catalyzes the reductive cleavage of the azo bond in aromatic azo compounds to the corresponding amines. This Listeria innocua serovar 6a (strain ATCC BAA-680 / CLIP 11262) protein is FMN-dependent NADH:quinone oxidoreductase 2.